Consider the following 1857-residue polypeptide: Ankyrin repeat domain-containing protein 31 (1857 aa).

2 disordered regions span residues 1–30 (MENGAEASDCDSDETVIEGSVTENEPEDEE) and 195–215 (SEPGEEVTQTMTSKETKDEES). A compositionally biased stretch (polar residues) spans 195–207 (SEPGEEVTQTMTS). ANK repeat units lie at residues 475-504 (FGENLLYKAALHNDVDLVRCCIKNGENVNQ), 508-537 (DGWTALHEASIGGYYQAVSELLKGGADVNV), and 541-570 (YQITPLHDAVMNRHYKVAELLLMSGADPLF). Residues 676–691 (KFGKSNLNSVKNSRTN) are compositionally biased toward polar residues. 5 disordered regions span residues 676 to 711 (KFGKSNLNSVKNSRTNVSKRKGQKNRQQKKTQVDDR), 813 to 844 (VTTHQQPHTNQEQYSSPYKSLGNNSSNEKGKA), 995 to 1038 (RDSS…TVVH), 1046 to 1065 (KAEKRREDLPGNEPINNTDF), and 1075 to 1137 (ANSS…QNFR). The segment covering 692-704 (VSKRKGQKNRQQK) has biased composition (basic residues). A compositionally biased stretch (polar residues) spans 814–839 (TTHQQPHTNQEQYSSPYKSLGNNSSN). Positions 1008 to 1019 (SLERKQDTDKNY) are enriched in basic and acidic residues. Residues 1023-1032 (GPNTSSSSRP) show a composition bias toward polar residues. The segment covering 1082 to 1136 (QRKEKENVRKSDAELTHNDSEAERTLKSCEEKKKNMDSETHSPCDIQEHRKDQNF) has biased composition (basic and acidic residues). 3 ANK repeats span residues 1162–1191 (KGESQLHVAARGGNLSRVKVLIEARADVNL), 1195–1224 (AGWTPLHKAASGGFDDVIIELLQAGANVNC), and 1228–1257 (DGIVPLHGASAGNHLKAAEILLEHGANPNQ). 4 disordered regions span residues 1457–1479 (NSDISSDKKSQEPPTMGDSAHAQ), 1540–1570 (GGLLRSKPTDDAEKIASSSQPAALTPHAENS), 1609–1640 (DPHSQKLSRCNPKRRNKKTASQQPSAGAAEPL), and 1663–1697 (AAAASHTDSTQSSLSSASAHQHPTKTVPHRNTTPR). Positions 1555–1570 (ASSSQPAALTPHAENS) are enriched in polar residues. Residues 1663–1683 (AAAASHTDSTQSSLSSASAHQ) show a composition bias toward low complexity. Positions 1687–1782 (KTVPHRNTTP…TYLGRELVKC (96 aa)) constitute an RAMA domain.

In terms of assembly, interacts with REC114; the interaction is direct. Interacts with IHO1. In terms of tissue distribution, present in meiotic cells (at protein level).

It is found in the nucleus. The protein localises to the chromosome. In terms of biological role, required for DNA double-strand breaks (DSBs) formation during meiotic recombination. Regulates the spatial and temporal patterns of pre-DSB recombinosome assembly and recombination activity by acting as a scaffold that anchors REC114 and other factors to specific genomic locations, thereby regulating DSB formation. Plays a key role in recombination in the pseudoautosomal regions of sex chromosomes. In Mus musculus (Mouse), this protein is Ankyrin repeat domain-containing protein 31.